A 239-amino-acid polypeptide reads, in one-letter code: Pyridoxine 5'-phosphate synthase (239 aa).

Asparagine 7 is a binding site for 3-amino-2-oxopropyl phosphate. Residue 9-10 (DH) participates in 1-deoxy-D-xylulose 5-phosphate binding. Arginine 18 contributes to the 3-amino-2-oxopropyl phosphate binding site. Histidine 43 (proton acceptor) is an active-site residue. Positions 45 and 50 each coordinate 1-deoxy-D-xylulose 5-phosphate. The active-site Proton acceptor is the glutamate 70. Threonine 100 provides a ligand contact to 1-deoxy-D-xylulose 5-phosphate. Histidine 191 (proton donor) is an active-site residue. 3-amino-2-oxopropyl phosphate contacts are provided by residues glycine 192 and 213–214 (GH).

Belongs to the PNP synthase family. In terms of assembly, homooctamer; tetramer of dimers.

It localises to the cytoplasm. The enzyme catalyses 3-amino-2-oxopropyl phosphate + 1-deoxy-D-xylulose 5-phosphate = pyridoxine 5'-phosphate + phosphate + 2 H2O + H(+). It participates in cofactor biosynthesis; pyridoxine 5'-phosphate biosynthesis; pyridoxine 5'-phosphate from D-erythrose 4-phosphate: step 5/5. Catalyzes the complicated ring closure reaction between the two acyclic compounds 1-deoxy-D-xylulose-5-phosphate (DXP) and 3-amino-2-oxopropyl phosphate (1-amino-acetone-3-phosphate or AAP) to form pyridoxine 5'-phosphate (PNP) and inorganic phosphate. The sequence is that of Pyridoxine 5'-phosphate synthase from Geobacter sp. (strain M21).